The following is a 320-amino-acid chain: Probable protein adenylyltransferase aq_aa38 (320 aa).

Residues 76-206 (VSEALILWIY…AIVVVEKLSR (131 aa)) enclose the Fido domain. ATP is bound by residues 100 to 101 (KS), 157 to 159 (GNG), and arginine 163.

The protein belongs to the fic family.

It carries out the reaction L-tyrosyl-[protein] + ATP = O-(5'-adenylyl)-L-tyrosyl-[protein] + diphosphate. The enzyme catalyses L-threonyl-[protein] + ATP = 3-O-(5'-adenylyl)-L-threonyl-[protein] + diphosphate. Probable adenylyltransferase that mediates the addition of adenosine 5'-monophosphate (AMP) to specific residues of target proteins. The chain is Probable protein adenylyltransferase aq_aa38 from Aquifex aeolicus (strain VF5).